The following is a 168-amino-acid chain: Cell division inhibitor SulA (168 aa).

Residues 105–111 (ALLTGNY) form a ftsZ binding region. The lon protease binding stretch occupies residues 161 to 168 (KIHSTLYH).

Belongs to the SulA family. As to quaternary structure, interacts with FtsZ. Is rapidly cleaved and degraded by the Lon protease once DNA damage is repaired.

Component of the SOS system and an inhibitor of cell division. Accumulation of SulA causes rapid cessation of cell division and the appearance of long, non-septate filaments. In the presence of GTP, binds a polymerization-competent form of FtsZ in a 1:1 ratio, thus inhibiting FtsZ polymerization and therefore preventing it from participating in the assembly of the Z ring. This mechanism prevents the premature segregation of damaged DNA to daughter cells during cell division. This Pectobacterium carotovorum subsp. carotovorum (strain PC1) protein is Cell division inhibitor SulA.